A 498-amino-acid polypeptide reads, in one-letter code: MPLELPSLNASIVGNTVQNGAVEQFLNIRYADIPGKFEKPVLKNDWNGAEIDATKVGPVCPQPRTPFNFFSVPDDLWEKVNVDTYQDGLLCDNLIVTRPKGVSANARLPTVVWIHGGSNIEGSIYNLIYEPQFLVAESVRVGKPIVHVCIEYRLGLAGFLTKNGKGNWGTWDQYTGCQWVNRHIQDFGGDPLNVTLTGESAGSVAVHNMLIKDSMNGRKLFRNAVMMSGTLETITPQPPKWHARLEEKVAKVTGKEVADLASLSDKELLDAQIKLNVAVCMTCDDGDFFEPGWKQHLTPDWLDKLIISDCKDEGMLYFLPVNAQDDEELLAKVAKSPVGKEISELYGIKEGGDIKSACLDLKTDATFNYFNHLLFKKMEEARNNGSTSRVYRLAVDEPNPHNPDQRAHHAVDVLYMFNSTKFNEHGDKLSRLFQSHFLRLAYGLEPWDHRNFGVYRNGGYQQLPLSELNKVRPVERYEALSKMDFGQVGRLSNALSRL.

Cys-60 and Cys-91 form a disulfide bridge. The N-linked (GlcNAc...) asparagine glycan is linked to Asn-193. The Acyl-ester intermediate role is filled by Ser-200. Asn-384 carries N-linked (GlcNAc...) asparagine glycosylation. Residue His-409 is the Charge relay system of the active site. A glycan (N-linked (GlcNAc...) asparagine) is linked at Asn-418.

Belongs to the type-B carboxylesterase/lipase family.

The catalysed reaction is a triacylglycerol + H2O = a diacylglycerol + a fatty acid + H(+). The chain is Lipase 3 (LIP3) from Yarrowia lipolytica (strain CLIB 122 / E 150) (Yeast).